The sequence spans 188 residues: Early nodulin-like protein 5 (188 aa).

An N-terminal signal peptide occupies residues 1–24 (MDSSKKIIIVMFLVTFYMFSCVSS). The 104-residue stretch at 25–128 (TEFEVGGENG…GQKMIVKVME (104 aa)) folds into the Phytocyanin domain. Cys-82 and Cys-116 are oxidised to a cystine. The disordered stretch occupies residues 127-157 (METESSTESPPPSSSSSSSSSSSLPASTPKA). Low complexity predominate over residues 129–155 (TESSTESPPPSSSSSSSSSSSLPASTP). Ser-170 carries the GPI-anchor amidated serine lipid modification. A propeptide spans 171-188 (SSGFVVSAVLIVSVFGLV) (removed in mature form).

It belongs to the early nodulin-like (ENODL) family. As to expression, mostly expressed in leaves and flowers, and, to a lower extent, in stems.

The protein localises to the cell membrane. Functionally, may act as a carbohydrate transporter. Mainly required for reproductive functions. The protein is Early nodulin-like protein 5 of Arabidopsis thaliana (Mouse-ear cress).